The sequence spans 340 residues: Protein-arginine kinase (340 aa).

Residues 21-242 form the Phosphagen kinase C-terminal domain; sequence VVLSSRIRLA…EQIIMQERVA (222 aa). Residues 24 to 28, H79, R113, 164 to 168, and 195 to 200 contribute to the ATP site; these read SSRIR, RASVM, and RGIYGE.

This sequence belongs to the ATP:guanido phosphotransferase family.

It catalyses the reaction L-arginyl-[protein] + ATP = N(omega)-phospho-L-arginyl-[protein] + ADP + H(+). In terms of biological role, catalyzes the specific phosphorylation of arginine residues in proteins. The chain is Protein-arginine kinase from Listeria monocytogenes serotype 4b (strain F2365).